A 111-amino-acid chain; its full sequence is RNA polymerase-binding protein RbpA (111 aa).

This sequence belongs to the RNA polymerase-binding protein RbpA family. Forms a complex with the RNAP catalytic core and with free principal sigma factors.

In terms of biological role, binds to RNA polymerase (RNAP), stimulating transcription from principal, but not alternative sigma factor promoters. The polypeptide is RNA polymerase-binding protein RbpA (Mycobacterium tuberculosis (strain CDC 1551 / Oshkosh)).